The following is a 153-amino-acid chain: Putative pre-16S rRNA nuclease (153 aa).

It belongs to the YqgF nuclease family.

The protein localises to the cytoplasm. Its function is as follows. Could be a nuclease involved in processing of the 5'-end of pre-16S rRNA. The polypeptide is Putative pre-16S rRNA nuclease (Chloroflexus aurantiacus (strain ATCC 29366 / DSM 635 / J-10-fl)).